A 437-amino-acid polypeptide reads, in one-letter code: Eukaryotic peptide chain release factor subunit 1 (437 aa).

Ala2 is modified (N-acetylalanine). Residues Asn61–Ser64 carry the NIKS motif; plays an important role in translational termination motif. Lys63 bears the 4-hydroxylysine mark. Lys87 is covalently cross-linked (Glycyl lysine isopeptide (Lys-Gly) (interchain with G-Cter in SUMO2)). Residue Gln185 is modified to N5-methylglutamine. Lys279 is covalently cross-linked (Glycyl lysine isopeptide (Lys-Gly) (interchain with G-Cter in ubiquitin)). A Phosphothreonine modification is found at Thr347. Residue Lys404 forms a Glycyl lysine isopeptide (Lys-Gly) (interchain with G-Cter in SUMO2) linkage.

This sequence belongs to the eukaryotic release factor 1 family. In terms of assembly, component of the eRF1-eRF3-GTP ternary complex, composed of ETF1/ERF1 and eRF3 (GSPT1/ERF3A or GSPT2/ERF3B) and GTP. Component of the transient SURF (SMG1-UPF1-eRF1-eRF3) complex. Interacts with JMJD4. The ETF1-GSPT1 complex interacts with JMJD4. In terms of processing, hydroxylation at Lys-63 by JMJD4 promotes its translational termination efficiency. Methylated at Gln-185 by N6AMT1. Post-translationally, ubiquitinated at Lys-279 via 'Lys-6'-linked polyubiquitin chains by RNF14 and RNF25 in response to ribosome collisions (ribosome stalling), leading to its degradation by the proteasome and rescue of stalled ribosomes.

Its subcellular location is the cytoplasm. Functionally, component of the eRF1-eRF3-GTP ternary complex, a ternary complex that mediates translation termination in response to the termination codons. The eRF1-eRF3-GTP complex binds to a stop codon in the ribosomal A-site. ETF1/ERF1 is responsible for stop codon recognition and inducing hydrolysis of peptidyl-tRNA. Following GTP hydrolysis, eRF3 (GSPT1/ERF3A or GSPT2/ERF3B) dissociates, permitting ETF1/eRF1 to accommodate fully in the A-site, followed by hydrolysis of peptidyl-tRNA. Component of the transient SURF complex which recruits UPF1 to stalled ribosomes in the context of nonsense-mediated decay (NMD) of mRNAs containing premature stop codons. Required for SHFL-mediated translation termination which inhibits programmed ribosomal frameshifting (-1PRF) of mRNA from viruses and cellular genes. This Bos taurus (Bovine) protein is Eukaryotic peptide chain release factor subunit 1 (ETF1).